The primary structure comprises 353 residues: Photosystem II D2 protein (353 aa).

At T2 the chain carries N-acetylthreonine. Phosphothreonine is present on T2. The chain crosses the membrane as a helical span at residues 41-61 (CAYFALGGWFTGTTFVTSWYT). H118 serves as a coordination point for chlorophyll a. The helical transmembrane segment at 125–141 (GFMLRQFELARSVQLRP) threads the bilayer. Pheophytin a is bound by residues Q130 and N143. The helical transmembrane segment at 153–166 (VFVSVFLIYPLGQS) threads the bilayer. Chlorophyll a is bound at residue H198. Residues 208–228 (AALLCAIHGATVENTLFEDGD) form a helical membrane-spanning segment. A plastoquinone is bound by residues H215 and F262. H215 contacts Fe cation. H269 lines the Fe cation pocket. The chain crosses the membrane as a helical span at residues 279 to 295 (GLWMSALGVVGLALNLR).

Belongs to the reaction center PufL/M/PsbA/D family. PSII is composed of 1 copy each of membrane proteins PsbA, PsbB, PsbC, PsbD, PsbE, PsbF, PsbH, PsbI, PsbJ, PsbK, PsbL, PsbM, PsbT, PsbX, PsbY, PsbZ, Psb30/Ycf12, at least 3 peripheral proteins of the oxygen-evolving complex and a large number of cofactors. It forms dimeric complexes. Requires The D1/D2 heterodimer binds P680, chlorophylls that are the primary electron donor of PSII, and subsequent electron acceptors. It shares a non-heme iron and each subunit binds pheophytin, quinone, additional chlorophylls, carotenoids and lipids. There is also a Cl(-1) ion associated with D1 and D2, which is required for oxygen evolution. The PSII complex binds additional chlorophylls, carotenoids and specific lipids. as cofactor.

It is found in the plastid. The protein resides in the chloroplast thylakoid membrane. The catalysed reaction is 2 a plastoquinone + 4 hnu + 2 H2O = 2 a plastoquinol + O2. In terms of biological role, photosystem II (PSII) is a light-driven water:plastoquinone oxidoreductase that uses light energy to abstract electrons from H(2)O, generating O(2) and a proton gradient subsequently used for ATP formation. It consists of a core antenna complex that captures photons, and an electron transfer chain that converts photonic excitation into a charge separation. The D1/D2 (PsbA/PsbD) reaction center heterodimer binds P680, the primary electron donor of PSII as well as several subsequent electron acceptors. D2 is needed for assembly of a stable PSII complex. In Citrus sinensis (Sweet orange), this protein is Photosystem II D2 protein.